The primary structure comprises 873 residues: Serine/threonine-protein phosphatase 4 regulatory subunit 4 (873 aa).

3 HEAT repeats span residues 213–251, 252–290, and 392–427; these read ILPL…TKSV, VLPE…RSQT, and NFHM…SKLL. Residues 686–720 adopt a coiled-coil conformation; that stretch reads QKKFYEKDLLDQEKEREELLLLEMEQLEKEKQQND. The segment covering 713 to 737 has biased composition (basic and acidic residues); sequence EKEKQQNDGRPMSDKMFEKKRRDTK. The tract at residues 713–766 is disordered; the sequence is EKEKQQNDGRPMSDKMFEKKRRDTKTPTQSLPKNIPISVPGPSSVTPSTSKEIK. Positions 747–762 are enriched in low complexity; it reads IPISVPGPSSVTPSTS. S775 bears the Phosphoserine mark. T797 carries the phosphothreonine modification. Polar residues predominate over residues 822 to 858; it reads TRNASSVPSSFSPNTPLPSTSRGTGNSVDPKSSGSKD. The interval 822–873 is disordered; the sequence is TRNASSVPSSFSPNTPLPSTSRGTGNSVDPKSSGSKDTQPRKATLKSRKSNP. Basic residues predominate over residues 864-873; sequence ATLKSRKSNP.

As to quaternary structure, serine/threonine-protein phosphatase 4 (PP4) occurs in different assemblies of the catalytic and one or more regulatory subunits. Component of the PP4 complex PPP4C-PPP4R4.

The protein localises to the cytoplasm. In terms of biological role, putative regulatory subunit of serine/threonine-protein phosphatase 4. In Homo sapiens (Human), this protein is Serine/threonine-protein phosphatase 4 regulatory subunit 4 (PPP4R4).